The sequence spans 1453 residues: Chromatin remodeling regulator CECR2 (1453 aa).

The tract at residues 170 to 237 (VQGRSNGELS…DLQTRNGSRG (68 aa)) is disordered. The segment covering 197–209 (TGKRRGRPPKRKK) has biased composition (basic residues). Residues 210-222 (LQEEIISSEKQEE) show a composition bias toward basic and acidic residues. Residues 223–234 (NSLTSDLQTRNG) show a composition bias toward polar residues. Phosphoserine is present on serine 402. Residues 414-518 (FELDDDFTAM…RCFHRAMTKH (105 aa)) enclose the Bromo domain. Threonine 526 is modified (phosphothreonine). Disordered regions lie at residues 536–667 (EKRE…HPPF), 767–796 (HGTTNPGRLGPDEKPHLGPGPSHHPHTLGH), 827–868 (GYMQ…GESM), 884–1020 (VCPP…DNSY), 1046–1072 (VVGEASPCRSEGKGLDGSGSEKPLCPR), 1131–1308 (LASM…YLYG), 1331–1368 (MLQTGSPYTPQRSASHFQPRAYPSPVPAHPPPHPVATQ), and 1396–1453 (QTGT…LDQS). Serine 551 is subject to Phosphoserine. Polar residues predominate over residues 637-649 (GSLQGSDPTNLHG). Residues 655 to 664 (EAPPGEPLQH) show a composition bias toward pro residues. A compositionally biased stretch (pro residues) spans 887–905 (PGVPYHPRQPTPPQLPGPF). Serine 983 carries the post-translational modification Phosphoserine. Residues 985–998 (QERETEDSQLKSDA) are compositionally biased toward basic and acidic residues. A compositionally biased stretch (polar residues) spans 999 to 1020 (SDSADTYKTSKNKNTWPLDNSY). Asymmetric dimethylarginine is present on residues arginine 1166 and arginine 1172. Low complexity-rich tracts occupy residues 1173–1187 (YSYQPPSQPSYHPYQ) and 1202–1211 (QRSLPSQRSP). The span at 1228 to 1250 (NVLSSLQGCETLNTALTSPTQMD) shows a compositional bias: polar residues. The span at 1265 to 1289 (GPEEEKMDESVERPESPKEFLDLDN) shows a compositional bias: basic and acidic residues. Position 1280 is a phosphoserine (serine 1280). Polar residues-rich tracts occupy residues 1291–1304 (NAATKRQNSLSTSD) and 1331–1346 (MLQTGSPYTPQRSASH). The span at 1352–1364 (YPSPVPAHPPPHP) shows a compositional bias: pro residues.

In terms of assembly, component of the CERF-1 ISWI chromatin remodeling complex (also called the CECR2-containing remodeling factor (CERF) complex) at least composed of CECR2 and SMARCA1. Component of the CERF-5 ISWI chromatin remodeling complex at least composed of CECR2 and SMARCA5/SNF2H. LUZP1 is detected as part of the CERF-1 and CERF-5 complexes in embryonic stem (ES) cells where it is involved in complex stabilization but is not detected in the complexes in the testis. Interacts with CCAR2; CCAR2 may form part of the CERF-1 and/or CEF-5 ISWI chromatin remodeling complexes in ES cells. Interacts with acetylated lysine residues on histone H2A and H3 (in vitro). Interacts with LRPPRC.

It localises to the nucleus. In terms of biological role, regulatory subunit of the ATP-dependent CERF-1 and CERF-5 ISWI chromatin remodeling complexes, which form ordered nucleosome arrays on chromatin and facilitate access to DNA during DNA-templated processes such as DNA replication, transcription, and repair. The complexes do not have the ability to slide mononucleosomes to the center of a DNA template. The CERF-1 ISWI chromatin remodeling complex has a lower ATP hydrolysis rate than the CERF-5 ISWI chromatin remodeling complex. Plays a role in various processes during development: required during embryogenesis for neural tube closure and inner ear development. In adults, required for spermatogenesis, via the formation of ISWI-type chromatin complexes. In histone-modifying complexes, CECR2 recognizes and binds acylated histones: binds histones that are acetylated and/or butyrylated. May also be involved through its interaction with LRPPRC in the integration of cytoskeletal network with vesicular trafficking, nucleocytosolic shuttling, transcription, chromosome remodeling and cytokinesis. This is Chromatin remodeling regulator CECR2 from Mus musculus (Mouse).